The following is a 279-amino-acid chain: DegV domain-containing protein SP_1112 (279 aa).

The DegV domain maps to 4-277 (IKIVTDSSVT…ENAWAILIRY (274 aa)). T62 and S94 together coordinate hexadecanoate.

May bind long-chain fatty acids, such as palmitate, and may play a role in lipid transport or fatty acid metabolism. This Streptococcus pneumoniae serotype 4 (strain ATCC BAA-334 / TIGR4) protein is DegV domain-containing protein SP_1112.